A 318-amino-acid polypeptide reads, in one-letter code: Methionyl-tRNA formyltransferase (318 aa).

112–115 contacts (6S)-5,6,7,8-tetrahydrofolate; it reads SILP.

The protein belongs to the Fmt family.

The enzyme catalyses L-methionyl-tRNA(fMet) + (6R)-10-formyltetrahydrofolate = N-formyl-L-methionyl-tRNA(fMet) + (6S)-5,6,7,8-tetrahydrofolate + H(+). Functionally, attaches a formyl group to the free amino group of methionyl-tRNA(fMet). The formyl group appears to play a dual role in the initiator identity of N-formylmethionyl-tRNA by promoting its recognition by IF2 and preventing the misappropriation of this tRNA by the elongation apparatus. The protein is Methionyl-tRNA formyltransferase of Haemophilus influenzae (strain PittEE).